We begin with the raw amino-acid sequence, 78 residues long: Neurotoxin 3FTx-LK (78 aa).

The signal sequence occupies residues 1 to 21 (MKTLLLTLVVVTIVCLDLGYT). Disulfide bonds link cysteine 24/cysteine 42, cysteine 35/cysteine 60, cysteine 64/cysteine 70, and cysteine 71/cysteine 76.

In terms of tissue distribution, expressed by the venom gland.

The protein resides in the secreted. Functionally, blocks both the muscle-twitch response to nerve stimulation and the response to exogenous acetylcholine. This Bungarus fasciatus (Banded krait) protein is Neurotoxin 3FTx-LK.